The sequence spans 642 residues: Threonine--tRNA ligase (642 aa).

One can recognise a TGS domain in the interval 1 to 61 (MPVITLPDGS…ESDAQLAIIT (61 aa)). Positions 243-534 (DHRKIGKQLD…LTEEYAGFFP (292 aa)) are catalytic. Zn(2+) is bound by residues cysteine 334, histidine 385, and histidine 511.

The protein belongs to the class-II aminoacyl-tRNA synthetase family. As to quaternary structure, homodimer. The cofactor is Zn(2+).

Its subcellular location is the cytoplasm. The enzyme catalyses tRNA(Thr) + L-threonine + ATP = L-threonyl-tRNA(Thr) + AMP + diphosphate + H(+). Functionally, catalyzes the attachment of threonine to tRNA(Thr) in a two-step reaction: L-threonine is first activated by ATP to form Thr-AMP and then transferred to the acceptor end of tRNA(Thr). Also edits incorrectly charged L-seryl-tRNA(Thr). The protein is Threonine--tRNA ligase of Yersinia pseudotuberculosis serotype O:1b (strain IP 31758).